A 293-amino-acid polypeptide reads, in one-letter code: Small ribosomal subunit protein uS3 (293 aa).

Residues 39–110 form the KH type-2 domain; the sequence is IRREIMKFLK…KISIKIKEVK (72 aa).

Belongs to the universal ribosomal protein uS3 family. In terms of assembly, part of the 30S ribosomal subunit. Forms a tight complex with proteins S10 and S14.

In terms of biological role, binds the lower part of the 30S subunit head. Binds mRNA in the 70S ribosome, positioning it for translation. The protein is Small ribosomal subunit protein uS3 of Borreliella burgdorferi (strain ATCC 35210 / DSM 4680 / CIP 102532 / B31) (Borrelia burgdorferi).